Reading from the N-terminus, the 190-residue chain is Thioredoxin F-type, chloroplastic (190 aa).

Residues 1–31 (MALHLSLSHQSWTSPAHPITSSDPTRSSVPG) are disordered. The N-terminal 77 residues, 1–77 (MALHLSLSHQ…SMEQALGTQE (77 aa)), are a transit peptide targeting the chloroplast. Residues 7-30 (LSHQSWTSPAHPITSSDPTRSSVP) show a composition bias toward polar residues. Residues 78–189 (MEAIVGKVTE…LLEAIQAARS (112 aa)) enclose the Thioredoxin domain. Residues cysteine 114 and cysteine 117 each act as nucleophile in the active site. Cysteine 114 and cysteine 117 form a disulfide bridge.

It belongs to the thioredoxin family. Plant F-type subfamily. In terms of assembly, forms a complex with heterodimeric ferredoxin-thioredoxin reductase (FTR) and ferredoxin.

It localises to the plastid. It is found in the chloroplast. In terms of biological role, participates in various redox reactions through the reversible oxidation of the active center dithiol to a disulfide. The F form is known to activate a number of enzymes of the photosynthetic carbon cycle. The chain is Thioredoxin F-type, chloroplastic from Spinacia oleracea (Spinach).